The sequence spans 327 residues: L-serine dehydratase/L-threonine deaminase (327 aa).

Lys41 is subject to N6-(pyridoxal phosphate)lysine.

Belongs to the serine/threonine dehydratase family. In terms of assembly, homodimer. It depends on pyridoxal 5'-phosphate as a cofactor.

It is found in the cytoplasm. It carries out the reaction L-serine = pyruvate + NH4(+). The catalysed reaction is L-threonine = 2-oxobutanoate + NH4(+). It participates in carbohydrate biosynthesis; gluconeogenesis. In terms of biological role, catalyzes the pyridoxal-phosphate-dependent dehydrative deamination of L-threonine and L-serine to ammonia and alpha-ketobutyrate and pyruvate, respectively. The chain is L-serine dehydratase/L-threonine deaminase (SDS) from Bos taurus (Bovine).